Reading from the N-terminus, the 187-residue chain is Shikimate kinase (187 aa).

14 to 19 is an ATP binding site; the sequence is GSGKST. Ser-18 contributes to the Mg(2+) binding site. Residues Asp-36, Arg-60, and Gly-82 each contribute to the substrate site. Arg-120 serves as a coordination point for ATP. Substrate is bound at residue Arg-147.

It belongs to the shikimate kinase family. Monomer. Mg(2+) serves as cofactor.

The protein resides in the cytoplasm. The catalysed reaction is shikimate + ATP = 3-phosphoshikimate + ADP + H(+). Its pathway is metabolic intermediate biosynthesis; chorismate biosynthesis; chorismate from D-erythrose 4-phosphate and phosphoenolpyruvate: step 5/7. In terms of biological role, catalyzes the specific phosphorylation of the 3-hydroxyl group of shikimic acid using ATP as a cosubstrate. The polypeptide is Shikimate kinase (Chlorobaculum parvum (strain DSM 263 / NCIMB 8327) (Chlorobium vibrioforme subsp. thiosulfatophilum)).